Consider the following 200-residue polypeptide: Glycerol-3-phosphate acyltransferase (200 aa).

5 helical membrane-spanning segments follow: residues 2–22 (FNIPAVAVSYLIGSLSFAVIV), 51–71 (KAAALTLLGDAAKGLVAVLLA), 84–104 (AIAAVALAALVGHMWPVFFGF), 114–134 (LGVLLALSPTTALVCALIWLV), and 158–178 (LFFMPHTSWIFATLAIAILVL).

It belongs to the PlsY family. As to quaternary structure, probably interacts with PlsX.

The protein localises to the cell inner membrane. It catalyses the reaction an acyl phosphate + sn-glycerol 3-phosphate = a 1-acyl-sn-glycero-3-phosphate + phosphate. It participates in lipid metabolism; phospholipid metabolism. In terms of biological role, catalyzes the transfer of an acyl group from acyl-phosphate (acyl-PO(4)) to glycerol-3-phosphate (G3P) to form lysophosphatidic acid (LPA). This enzyme utilizes acyl-phosphate as fatty acyl donor, but not acyl-CoA or acyl-ACP. This is Glycerol-3-phosphate acyltransferase from Neisseria meningitidis serogroup A / serotype 4A (strain DSM 15465 / Z2491).